The following is a 180-amino-acid chain: ATP synthase subunit delta (180 aa).

The protein belongs to the ATPase delta chain family. As to quaternary structure, F-type ATPases have 2 components, F(1) - the catalytic core - and F(0) - the membrane proton channel. F(1) has five subunits: alpha(3), beta(3), gamma(1), delta(1), epsilon(1). F(0) has three main subunits: a(1), b(2) and c(10-14). The alpha and beta chains form an alternating ring which encloses part of the gamma chain. F(1) is attached to F(0) by a central stalk formed by the gamma and epsilon chains, while a peripheral stalk is formed by the delta and b chains.

The protein localises to the cell membrane. Functionally, f(1)F(0) ATP synthase produces ATP from ADP in the presence of a proton or sodium gradient. F-type ATPases consist of two structural domains, F(1) containing the extramembraneous catalytic core and F(0) containing the membrane proton channel, linked together by a central stalk and a peripheral stalk. During catalysis, ATP synthesis in the catalytic domain of F(1) is coupled via a rotary mechanism of the central stalk subunits to proton translocation. This protein is part of the stalk that links CF(0) to CF(1). It either transmits conformational changes from CF(0) to CF(1) or is implicated in proton conduction. The polypeptide is ATP synthase subunit delta (Alkaliphilus metalliredigens (strain QYMF)).